The primary structure comprises 583 residues: uncharacterized protein (583 aa).

Residues Y162 to K424 enclose the FAD-binding FR-type domain.

It belongs to the flavoprotein pyridine nucleotide cytochrome reductase family. FAD serves as cofactor.

Its subcellular location is the mitochondrion. This is an uncharacterized protein from Schizosaccharomyces pombe (strain 972 / ATCC 24843) (Fission yeast).